Consider the following 125-residue polypeptide: Small ribosomal subunit protein bS6 (125 aa).

The disordered stretch occupies residues 99-125 (ASPMVKAREERKPLTEVENNDFEDAEE). Residues 104–113 (KAREERKPLT) are compositionally biased toward basic and acidic residues. Residues 116-125 (ENNDFEDAEE) are compositionally biased toward acidic residues.

This sequence belongs to the bacterial ribosomal protein bS6 family.

Functionally, binds together with bS18 to 16S ribosomal RNA. The polypeptide is Small ribosomal subunit protein bS6 (Histophilus somni (strain 2336) (Haemophilus somnus)).